A 69-amino-acid chain; its full sequence is Atypical cationic antimicrobial peptide (69 aa).

A signal peptide spans 1 to 22 (MAFLKKSLFLVLFLGLVSLSIC). Residues 23 to 45 (DEEKRENEDEENQEDDEQSEMRR) constitute a propeptide that is removed on maturation. Residues 25 to 45 (EKRENEDEENQEDDEQSEMRR) are disordered. Residues 30–40 (EDEENQEDDEQ) show a composition bias toward acidic residues.

This sequence belongs to the frog skin active peptide (FSAP) family. Monomer and/or weakly self-associated, oligomer, and amyloid-like fibril. Can adopt a monomeric nonamphipathic alpha-helical conformation, possibly with the aid of its cationic N- and C-termini, when bound to anionic membranes. Forms stable and ordered beta-sheet aggregates in aqueous environment or when bound to anionic or zwitterionic phospholipid vesicles. In terms of tissue distribution, expressed by the skin glands.

Its subcellular location is the secreted. The protein localises to the target cell membrane. Atypical cationic antimicrobial peptide with potent activity against Gram-negative and Gram-positive bacteria. Acts by inducing permeabilization of bacterial membrane. In vitro, also shows chemoattractant activity, which is mediated through a G protein-coupled receptor (probably FPR2 coupled to the ERK1/2 MAPK kinase pathway). Has slow-kinetic self-association and amyloid-like properties that modulate its activity. The soluble, weakly self-associated forms act on leukocytes to promote chemotaxis but have low antibacterial activity, the oligomers exhibit potent antimicrobial activity, whereas the amyloid-like fibrils have a very weak antibacterial activity. The membrane composition has a great influence on the peptide behavior. The peptide induces membrane leakage and insertion to a lesser extent in model membranes of the anionic lipid phosphatidylglycerol (PG) than in the model membranes of the zwitterionic lipid phosphatidylcholine (PC) vesicles. It forms more fibrils in PC than in PG. Membrane perturbations are more observed in the presence of PG than in the presence of PC. The peptide shows low hemolytic activity. This chain is Atypical cationic antimicrobial peptide, found in Phyllomedusa sauvagei (Sauvage's leaf frog).